A 62-amino-acid polypeptide reads, in one-letter code: MKASDLNKSTVDELRSTEAELTKELFNLKFQLHTGRLEDTSKPARIKKDIARVKSVLRAKRG.

It belongs to the universal ribosomal protein uL29 family.

The sequence is that of Large ribosomal subunit protein uL29 from Geotalea daltonii (strain DSM 22248 / JCM 15807 / FRC-32) (Geobacter daltonii).